Reading from the N-terminus, the 82-residue chain is Putative defensin-like protein 191 (82 aa).

The N-terminal stretch at 1–28 is a signal peptide; the sequence is MAKSVNATGFITYMVIFLILTGISRVKA. 4 cysteine pairs are disulfide-bonded: cysteine 33–cysteine 79, cysteine 46–cysteine 65, cysteine 51–cysteine 74, and cysteine 55–cysteine 76.

Belongs to the DEFL family.

The protein localises to the secreted. The sequence is that of Putative defensin-like protein 191 from Arabidopsis thaliana (Mouse-ear cress).